Consider the following 200-residue polypeptide: NADH-quinone oxidoreductase subunit I (200 aa).

2 4Fe-4S ferredoxin-type domains span residues 73-102 (RLLE…METT) and 112-141 (LNYS…HGGD). Positions 82, 85, 88, 92, 121, 124, 127, and 131 each coordinate [4Fe-4S] cluster.

The protein belongs to the complex I 23 kDa subunit family. As to quaternary structure, NDH-1 is composed of 14 different subunits. Subunits NuoA, H, J, K, L, M, N constitute the membrane sector of the complex. [4Fe-4S] cluster is required as a cofactor.

The protein localises to the cell inner membrane. The catalysed reaction is a quinone + NADH + 5 H(+)(in) = a quinol + NAD(+) + 4 H(+)(out). In terms of biological role, NDH-1 shuttles electrons from NADH, via FMN and iron-sulfur (Fe-S) centers, to quinones in the respiratory chain. The immediate electron acceptor for the enzyme in this species is believed to be ubiquinone. Couples the redox reaction to proton translocation (for every two electrons transferred, four hydrogen ions are translocated across the cytoplasmic membrane), and thus conserves the redox energy in a proton gradient. In Campylobacter hominis (strain ATCC BAA-381 / DSM 21671 / CCUG 45161 / LMG 19568 / NCTC 13146 / CH001A), this protein is NADH-quinone oxidoreductase subunit I.